The following is a 406-amino-acid chain: Tryptophan synthase beta chain (406 aa).

K99 is modified (N6-(pyridoxal phosphate)lysine).

Belongs to the TrpB family. As to quaternary structure, tetramer of two alpha and two beta chains. It depends on pyridoxal 5'-phosphate as a cofactor.

The catalysed reaction is (1S,2R)-1-C-(indol-3-yl)glycerol 3-phosphate + L-serine = D-glyceraldehyde 3-phosphate + L-tryptophan + H2O. It functions in the pathway amino-acid biosynthesis; L-tryptophan biosynthesis; L-tryptophan from chorismate: step 5/5. In terms of biological role, the beta subunit is responsible for the synthesis of L-tryptophan from indole and L-serine. The polypeptide is Tryptophan synthase beta chain (trpB) (Caulobacter vibrioides (strain ATCC 19089 / CIP 103742 / CB 15) (Caulobacter crescentus)).